The chain runs to 398 residues: Bifunctional enzyme IspD/IspF (398 aa).

Positions 1 to 234 (MPSSKRTAAI…ARLAAALGDI (234 aa)) are 2-C-methyl-D-erythritol 4-phosphate cytidylyltransferase. The tract at residues 235–398 (RTGTGYDVHA…LPWNDKGRDT (164 aa)) is 2-C-methyl-D-erythritol 2,4-cyclodiphosphate synthase. A divalent metal cation is bound by residues D241 and H243. 4-CDP-2-C-methyl-D-erythritol 2-phosphate contacts are provided by residues 241-243 (DVH) and 267-268 (HS). Residue H275 coordinates a divalent metal cation. 4-CDP-2-C-methyl-D-erythritol 2-phosphate is bound by residues 289–291 (DIG), 365–368 (TTSE), F372, and R375.

In the N-terminal section; belongs to the IspD/TarI cytidylyltransferase family. IspD subfamily. It in the C-terminal section; belongs to the IspF family. A divalent metal cation serves as cofactor.

The catalysed reaction is 2-C-methyl-D-erythritol 4-phosphate + CTP + H(+) = 4-CDP-2-C-methyl-D-erythritol + diphosphate. The enzyme catalyses 4-CDP-2-C-methyl-D-erythritol 2-phosphate = 2-C-methyl-D-erythritol 2,4-cyclic diphosphate + CMP. Its pathway is isoprenoid biosynthesis; isopentenyl diphosphate biosynthesis via DXP pathway; isopentenyl diphosphate from 1-deoxy-D-xylulose 5-phosphate: step 2/6. It participates in isoprenoid biosynthesis; isopentenyl diphosphate biosynthesis via DXP pathway; isopentenyl diphosphate from 1-deoxy-D-xylulose 5-phosphate: step 4/6. In terms of biological role, bifunctional enzyme that catalyzes the formation of 4-diphosphocytidyl-2-C-methyl-D-erythritol from CTP and 2-C-methyl-D-erythritol 4-phosphate (MEP) (IspD), and catalyzes the conversion of 4-diphosphocytidyl-2-C-methyl-D-erythritol 2-phosphate (CDP-ME2P) to 2-C-methyl-D-erythritol 2,4-cyclodiphosphate (ME-CPP) with a corresponding release of cytidine 5-monophosphate (CMP) (IspF). The protein is Bifunctional enzyme IspD/IspF of Nitrobacter winogradskyi (strain ATCC 25391 / DSM 10237 / CIP 104748 / NCIMB 11846 / Nb-255).